A 282-amino-acid chain; its full sequence is Elongation factor Ts (282 aa).

The tract at residues 80-83 (TDFV) is involved in Mg(2+) ion dislocation from EF-Tu.

Belongs to the EF-Ts family.

It localises to the cytoplasm. In terms of biological role, associates with the EF-Tu.GDP complex and induces the exchange of GDP to GTP. It remains bound to the aminoacyl-tRNA.EF-Tu.GTP complex up to the GTP hydrolysis stage on the ribosome. The sequence is that of Elongation factor Ts from Protochlamydia amoebophila (strain UWE25).